The primary structure comprises 873 residues: Tyrosine-protein kinase receptor TYRO3 (873 aa).

Positions 1–28 (MELRRSMALPRLLLLGLWAAALRDGAVA) are cleaved as a signal peptide. 2 Ig-like C2-type domains span residues 29–116 (AGMK…KEES) and 127–208 (PYFT…ATVQ). At 29-416 (AGMKFTGSPI…QRQPPYGTSW (388 aa)) the chain is on the extracellular side. The N-linked (GlcNAc...) asparagine glycan is linked to asparagine 51. 2 disulfide bridges follow: cysteine 52-cysteine 105 and cysteine 148-cysteine 191. Asparagine 179, asparagine 184, asparagine 218, asparagine 228, asparagine 281, asparagine 353, and asparagine 367 each carry an N-linked (GlcNAc...) asparagine glycan. 2 Fibronectin type-III domains span residues 215 to 308 (PPLN…TLEL) and 310 to 403 (PSST…AQEV). A helical transmembrane segment spans residues 417 to 437 (VPVALGILTALVTAVALALIL). Topologically, residues 438 to 873 (LRKRRKETRF…ELETEGEKSC (436 aa)) are cytoplasmic. The Protein kinase domain maps to 505-776 (FTLGRMLGKG…GVLRSQLEMI (272 aa)). ATP is bound by residues 511 to 519 (LGKGEFGSV) and lysine 537. Catalysis depends on aspartate 642, which acts as the Proton acceptor. A Phosphotyrosine; by autocatalysis modification is found at tyrosine 673. Residues 845 to 873 (VEGERHPEGQEGENKSLLYELETEGEKSC) form a disordered region. Basic and acidic residues predominate over residues 847–858 (GERHPEGQEGEN).

This sequence belongs to the protein kinase superfamily. Tyr protein kinase family. AXL/UFO subfamily. Autophosphorylated on tyrosine residues. Detected in embryonic retina (at protein level). detected in brain, retina, kidney and in retinal Mueller glia-like cells.

Its subcellular location is the cell membrane. It carries out the reaction L-tyrosyl-[protein] + ATP = O-phospho-L-tyrosyl-[protein] + ADP + H(+). Its function is as follows. Receptor tyrosine kinase that transduces signals from the extracellular matrix into the cytoplasm by binding to several ligands. Regulates many physiological processes including cell survival, migration and differentiation. Ligand binding at the cell surface induces dimerization and autophosphorylation of TYRO3 on its intracellular domain that provides docking sites for downstream signaling molecules. Following activation by ligand, enhances PI3-kinase activity and activates the AKT survival pathway, including nuclear translocation of NF-kappa-B and up-regulation of transcription of NF-kappa-B-regulated genes. This is Tyrosine-protein kinase receptor TYRO3 (TYRO3) from Gallus gallus (Chicken).